The primary structure comprises 427 residues: Flotillin-1 (427 aa).

Residues serine 19, serine 163, and serine 385 each carry the phosphoserine modification.

The protein belongs to the band 7/mec-2 family. Flotillin subfamily. As to quaternary structure, heterooligomeric complex of flotillin-1 and flotillin-2 and caveolin-1 and caveolin-2. Interacts with ECPAS.

It is found in the cell membrane. Its subcellular location is the endosome. The protein localises to the membrane. The protein resides in the caveola. It localises to the melanosome. It is found in the membrane raft. In terms of biological role, may act as a scaffolding protein within caveolar membranes, functionally participating in formation of caveolae or caveolae-like vesicles. The chain is Flotillin-1 (FLOT1) from Bos taurus (Bovine).